Consider the following 70-residue polypeptide: Protein SlyX homolog (70 aa).

This sequence belongs to the SlyX family.

This Shewanella denitrificans (strain OS217 / ATCC BAA-1090 / DSM 15013) protein is Protein SlyX homolog.